Reading from the N-terminus, the 677-residue chain is Serine/threonine-protein kinase YPK2/YKR2 (677 aa).

Positions 1 to 12 (MHSWRISKFKLG) are enriched in basic residues. The tract at residues 1 to 115 (MHSWRISKFK…ETQGPSSESG (115 aa)) is disordered. The span at 41-56 (KHHDGSPKNHNHEHEH) shows a compositional bias: basic and acidic residues. Composition is skewed to polar residues over residues 61–93 (INTN…NDNS) and 101–115 (SQSS…SESG). 2 positions are modified to phosphothreonine: threonine 63 and threonine 66. Serine 72 carries the phosphoserine modification. Positions 344-599 (FDLLKVIGKG…TDEIRNHPFF (256 aa)) constitute a Protein kinase domain. Residues 350–358 (IGKGSFGKV) and lysine 373 contribute to the ATP site. Aspartate 467 functions as the Proton acceptor in the catalytic mechanism. Threonine 499 is subject to Phosphothreonine. Threonine 501 is subject to Phosphothreonine; by PKH2. Residues 600-670 (KDISWKKLLL…IGDEQLGDSP (71 aa)) form the AGC-kinase C-terminal domain. The residue at position 641 (serine 641) is a Phosphoserine; by TOR2. The residue at position 650 (serine 650) is a Phosphoserine. Threonine 659 is subject to Phosphothreonine; by TOR2. A Phosphoserine modification is found at serine 669.

The protein belongs to the protein kinase superfamily. AGC Ser/Thr protein kinase family. RAC subfamily. In terms of processing, autophosphorylated. Phosphorylated by PKH2 and TOR2.

Its subcellular location is the cytoplasm. It carries out the reaction L-seryl-[protein] + ATP = O-phospho-L-seryl-[protein] + ADP + H(+). The catalysed reaction is L-threonyl-[protein] + ATP = O-phospho-L-threonyl-[protein] + ADP + H(+). With respect to regulation, activated by phytosphingosine (PHS), a sphingoid long chain base. Activated by PKH2 phosphorylation. Kinase activity is regulated by TOR2 via direct phosphorylation of Ser-641 and Thr-659. Functionally, plays an essential role in the proliferation of yeast cells. Involved in a signaling pathway, required for optimal cell wall integrity, that acts in parallel with the PKC1-SLT2-dependent pathway. A substrate of TOR complex 2 (TORC2) and required for TORC2 to regulate spatial aspects of cell growth. Phosphorylation of residue Thr-501 is indispensable for function. May act as a downstream kinase in the sphingolipid-mediated signaling pathway. This chain is Serine/threonine-protein kinase YPK2/YKR2 (YPK2), found in Saccharomyces cerevisiae (strain ATCC 204508 / S288c) (Baker's yeast).